A 256-amino-acid chain; its full sequence is 5'-nucleotidase SurE (256 aa).

The a divalent metal cation site is built by Asp-13, Asp-14, Ser-44, and Asn-101.

The protein belongs to the SurE nucleotidase family. It depends on a divalent metal cation as a cofactor.

The protein resides in the cytoplasm. The catalysed reaction is a ribonucleoside 5'-phosphate + H2O = a ribonucleoside + phosphate. Its function is as follows. Nucleotidase that shows phosphatase activity on nucleoside 5'-monophosphates. This Porphyromonas gingivalis (strain ATCC 33277 / DSM 20709 / CIP 103683 / JCM 12257 / NCTC 11834 / 2561) protein is 5'-nucleotidase SurE.